A 221-amino-acid polypeptide reads, in one-letter code: Probable molybdenum cofactor guanylyltransferase (221 aa).

GTP is bound by residues 17-19, K29, D74, and D103; that span reads LAG. D103 is a Mg(2+) binding site.

It belongs to the MobA family. Mg(2+) serves as cofactor.

Its subcellular location is the cytoplasm. The catalysed reaction is Mo-molybdopterin + GTP + H(+) = Mo-molybdopterin guanine dinucleotide + diphosphate. Transfers a GMP moiety from GTP to Mo-molybdopterin (Mo-MPT) cofactor (Moco or molybdenum cofactor) to form Mo-molybdopterin guanine dinucleotide (Mo-MGD) cofactor. The polypeptide is Probable molybdenum cofactor guanylyltransferase (Peptoclostridium acidaminophilum (Eubacterium acidaminophilum)).